Here is a 1100-residue protein sequence, read N- to C-terminus: Regulator of nonsense transcripts 1 (1100 aa).

Residues 42-53 are compositionally biased toward low complexity; sequence SQTQTQGQTQSQ. The tract at residues 42–67 is disordered; sequence SQTQTQGQTQSQLDNQVNGPDGVLPN. A Upf1 CH-rich domain is found at 94-251; that stretch reads TKDLPVHACS…NKLEELWKEN (158 aa). Residues Cys-102, Cys-105, Cys-116, Ser-119, Cys-124, His-134, His-138, Cys-144, Cys-162, Cys-165, Cys-188, and Cys-192 each contribute to the Zn(2+) site. Positions 102–134 are C3H; the sequence is CSYCGIHDPACVVYCNTSKKWFCNGRGNTSGSH. The tract at residues 116 to 144 is CC/SHH/C; that stretch reads CNTSKKWFCNGRGNTSGSHIVNHLVRAKC. Residues 162-192 form a C4 region; it reads CYNCGCRNVFLLGFIPAKADSVVVLLCRQPC. ATP is bound by residues Gln-455, 475–479, Gln-645, Tyr-682, and Glu-813; that span reads GTGKT. A disordered region spans residues 978-1065; it reads LGQVNGPAAG…QPELSQDSYL (88 aa). The segment covering 982–993 has biased composition (low complexity); it reads NGPAAGRGAPKG. Residues 1012 to 1063 show a composition bias toward polar residues; it reads SGQPNMPNSQASQDLVSQPFSQGPLTQGYITMSQPSQMSQPGLSQPELSQDS.

The protein belongs to the DNA2/NAM7 helicase family.

Its subcellular location is the cytoplasm. It localises to the P-body. It is found in the nucleus. The protein resides in the perinuclear region. RNA-dependent helicase and ATPase required for nonsense-mediated decay (NMD) of mRNAs containing premature stop codons. Is recruited to mRNAs upon translation termination and undergoes a cycle of phosphorylation and dephosphorylation; its phosphorylation appears to be a key step in NMD. The formation of an upf1-upf2-upf3 surveillance complex is believed to activate NMD. The protein is Regulator of nonsense transcripts 1 of Danio rerio (Zebrafish).